Consider the following 107-residue polypeptide: Phosphoribosyl-ATP pyrophosphatase (107 aa).

Belongs to the PRA-PH family.

It is found in the cytoplasm. It carries out the reaction 1-(5-phospho-beta-D-ribosyl)-ATP + H2O = 1-(5-phospho-beta-D-ribosyl)-5'-AMP + diphosphate + H(+). Its pathway is amino-acid biosynthesis; L-histidine biosynthesis; L-histidine from 5-phospho-alpha-D-ribose 1-diphosphate: step 2/9. The polypeptide is Phosphoribosyl-ATP pyrophosphatase (Bacillus cereus (strain AH187)).